We begin with the raw amino-acid sequence, 395 residues long: Gastric triacylglycerol lipase (395 aa).

The N-terminal stretch at 1 to 18 (MWLLLITSVISTFGGAHG) is a signal peptide. N-linked (GlcNAc...) asparagine glycans are attached at residues N33, N68, and N98. Residues 77–376 (PVVYLQHGLI…LAYNHLDFIW (300 aa)) form the AB hydrolase-1 domain. The active-site Nucleophile is the S171. Residues C245 and C254 are joined by a disulfide bond. N270 carries N-linked (GlcNAc...) asparagine glycosylation. Residues D342 and H371 each act as charge relay system in the active site.

This sequence belongs to the AB hydrolase superfamily. Lipase family. In terms of tissue distribution, secreted by the serous (von Ebner's) glands at the back of the rat tongue.

It localises to the secreted. The enzyme catalyses a triacylglycerol + H2O = a diacylglycerol + a fatty acid + H(+). It carries out the reaction 1,2,3-tri-(9Z-octadecenoyl)-glycerol + H2O = 1,2-di-(9Z-octadecenoyl)-sn-glycerol + (9Z)-octadecenoate + H(+). It catalyses the reaction 1,2,3-trioctanoylglycerol + H2O = 1,2-dioctanoyl-sn-glycerol + octanoate + H(+). Catalyzes the hydrolysis of triacylglycerols to yield free fatty acids, diacylglycerol, monoacylglycerol, and glycerol. Shows a preferential hydrolysis at the sn-3 position of triacylglycerol. This Rattus norvegicus (Rat) protein is Gastric triacylglycerol lipase (Lipf).